Reading from the N-terminus, the 148-residue chain is Aspartate carbamoyltransferase regulatory chain (148 aa).

Residues cysteine 106, cysteine 111, cysteine 134, and cysteine 137 each contribute to the Zn(2+) site.

This sequence belongs to the PyrI family. Contains catalytic and regulatory chains. It depends on Zn(2+) as a cofactor.

Functionally, involved in allosteric regulation of aspartate carbamoyltransferase. This Methanococcus maripaludis (strain C5 / ATCC BAA-1333) protein is Aspartate carbamoyltransferase regulatory chain.